The chain runs to 90 residues: MTVKQTVEITNKLGMHARPAMKLFELMQGFDAEVLLRNDEGTEAEANSVIALLMLDSAKGRQIEVEATGPQEEEALAAVIALFNSGFDED.

One can recognise an HPr domain in the interval 2–90 (TVKQTVEITN…ALFNSGFDED (89 aa)). Residue H16 is the Pros-phosphohistidine intermediate of the active site.

It belongs to the HPr family.

It localises to the cytoplasm. Its function is as follows. Component of the phosphoenolpyruvate-dependent nitrogen-metabolic phosphotransferase system (nitrogen-metabolic PTS), that seems to be involved in regulating nitrogen metabolism. The phosphoryl group from phosphoenolpyruvate (PEP) is transferred to the phosphoryl carrier protein NPr by enzyme I-Ntr. Phospho-NPr then transfers it to EIIA-Ntr. Could function in the transcriptional regulation of sigma-54 dependent operons in conjunction with the NPr (PtsO) and EIIA-Ntr (PtsN) proteins. In Escherichia coli O157:H7, this protein is Phosphocarrier protein NPr (ptsO).